The primary structure comprises 484 residues: Aspartyl aminopeptidase (484 aa).

An N-acetylmethionine modification is found at methionine 1. Histidine 84 is a binding site for Zn(2+). Residue histidine 159 coordinates substrate. The span at 188 to 206 (PVESKSTTTTTTTESPKTS) shows a compositional bias: low complexity. The interval 188 to 213 (PVESKSTTTTTTTESPKTSDPQDVNS) is disordered. Aspartate 266 is a binding site for Zn(2+). Glutamate 301 is a substrate binding site. Zn(2+)-binding residues include glutamate 302 and aspartate 354. 4 residues coordinate substrate: aspartate 354, histidine 357, lysine 382, and tyrosine 389. Histidine 448 lines the Zn(2+) pocket.

This sequence belongs to the peptidase M18 family. In terms of assembly, tetrahedron-shaped homododecamer built from six homodimers. It depends on Zn(2+) as a cofactor.

It is found in the cytoplasm. It carries out the reaction Release of an N-terminal aspartate or glutamate from a peptide, with a preference for aspartate.. Functionally, likely to play an important role in intracellular protein and peptide metabolism. This is Aspartyl aminopeptidase (dnpep) from Dictyostelium discoideum (Social amoeba).